A 396-amino-acid polypeptide reads, in one-letter code: Probable sugar efflux transporter (396 aa).

12 helical membrane-spanning segments follow: residues V15–L35, V50–L70, L81–F101, V103–A123, A136–I156, T169–P189, L202–V222, F246–G266, S275–A295, L301–V321, V333–G353, and A364–F384.

It belongs to the major facilitator superfamily. SotB (TC 2.A.1.2) family.

It localises to the cell inner membrane. Functionally, involved in the efflux of sugars. The physiological role may be the reduction of the intracellular concentration of toxic sugars or sugar metabolites. The protein is Probable sugar efflux transporter of Salmonella paratyphi A (strain ATCC 9150 / SARB42).